Reading from the N-terminus, the 243-residue chain is Small ribosomal subunit protein uS3 (243 aa).

Ala2 is subject to N-acetylalanine. Phosphoserine occurs at positions 6 and 35. Residues 21–92 (LNEFLTRELA…SVELYAEKVA (72 aa)) form the KH type-2 domain. Thr42 carries the phosphothreonine modification. Residue Lys62 is modified to N6-acetyllysine. An asymmetric dimethylarginine mark is found at Arg64, Arg65, and Arg67. The residue at position 70 (Thr70) is a Phosphothreonine. A Glycyl lysine isopeptide (Lys-Gly) (interchain with G-Cter in ubiquitin) cross-link involves residue Lys90. Position 104 is a phosphoserine (Ser104). At Lys132 the chain carries N6-succinyllysine. The segment at 200–243 (PKKPLPDHVSIVEPKDEILPTTPISEQKGGKPEPPAMPQPVPTA) is disordered. A Glycyl lysine isopeptide (Lys-Gly) (interchain with G-Cter in ubiquitin) cross-link involves residue Lys202. Phosphoserine is present on Ser209. Lys214 participates in a covalent cross-link: Glycyl lysine isopeptide (Lys-Gly) (interchain with G-Cter in SUMO2); alternate. Lys214 is covalently cross-linked (Glycyl lysine isopeptide (Lys-Gly) (interchain with G-Cter in ubiquitin); alternate). Thr220 and Thr221 each carry phosphothreonine. Position 224 is a phosphoserine (Ser224). Lys230 is covalently cross-linked (Glycyl lysine isopeptide (Lys-Gly) (interchain with G-Cter in SUMO2)). Over residues 231–243 (PEPPAMPQPVPTA) the composition is skewed to pro residues. Thr242 carries the post-translational modification Phosphothreonine.

It belongs to the universal ribosomal protein uS3 family. Component of the 40S small ribosomal subunit. Identified in a IGF2BP1-dependent mRNP granule complex containing untranslated mRNAs. Interacts with HNRPD. Interacts with PRMT1; the interaction methylates RPS3. Interacts with SUMO1; the interaction sumoylates RPS3. Interacts with UBC9. Interacts with CDK1; the interaction phosphorylates RPS3. Interacts with PRKCD; the interaction phosphorylates RPS3. Interacts with PKB/AKT; the interaction phosphorylates RPS3. Interacts with E2F1; the interaction occurs in the absence of nerve growth factor and increases transcription of pro-apoptotic proteins BCL2L11/BIM and HRK/Dp5. Interacts with the base excision repair proteins APEX1 and OGG1; interaction with OGG1 increases OGG1 N-glycosylase activity. Interacts with UNG; the interaction increases the uracil excision activity of UNG1. Interacts with HSP90; the interaction prevents the ubiquitination and proteasome-dependent degradation of RPS3 and is suppressed by increased ROS levels. Interacts with TOM70; the interaction promotes translocation of RPS3 to the mitochondrion. Interacts (via N-terminus) with RELA (via N-terminus); the interaction enhances the DNA-binding activity of the NF-kappa-B p65-p50 complex. Interacts with NFKBIA; the interaction is direct and may bridge the interaction between RPS3 and RELA. Interacts with IKKB; the interaction phosphorylates RPS3 and enhances its translocation to the nucleus. Interacts (via KH domain) with MDM2 and TP53. Interacts with TRADD. Interacts with ASCC3. Identified in a HCV IRES-mediated translation complex, at least composed of EIF3C, IGF2BP1, RPS3 and HCV RNA-replicon. Interacts with CRY1. In terms of processing, methylation by PRMT1 is required for import into the nucleolus and for ribosome assembly. Post-translationally, sumoylation by SUMO1 enhances protein stability through increased resistance to proteolysis. Sumoylation occurs at one or more of the three consensus sites, Lys-18, Lys-214 and Lys-230. Phosphorylation at Thr-221 by CDK1 occurs mainly in G2/M phase. Phosphorylation by PRKCD occurs on a non-ribosomal-associated form which results in translocation of RPS3 to the nucleus and enhances its endonuclease activity. Phosphorylated on Ser-209 by IKKB in response to activation of the NF-kappa-B p65-p50 complex which enhances the association of RPS3 with importin-alpha and mediates the nuclear translocation of RPS3. Phosphorylation by MAPK is required for translocation to the nucleus following exposure of cells to DNA damaging agents such as hydrogen peroxide. Phosphorylation by PKB/AKT mediates RPS3 nuclear translocation, enhances RPS3 endonuclease activity and suppresses RPS3-induced neuronal apoptosis. In terms of processing, ubiquitinated; ubiquitination is prevented by interaction with HSP90 which stabilizes the protein. Monoubiquitinated at Lys-214 by RNF10 and ZNF598 when a ribosome has stalled during translation of poly(A) sequences, leading to preclude synthesis of a long poly-lysine tail and initiate the ribosome quality control (RQC) pathway to degrade the potentially detrimental aberrant nascent polypeptide. Deubiquitinated at Lys-214 by USP10, preventing degradation by the proteasome and promoting 40S ribosome subunit recycling following ribosome dissociation. Post-translationally, ufmylated by UFL1.

It is found in the cytoplasm. Its subcellular location is the nucleus. The protein localises to the nucleolus. The protein resides in the mitochondrion inner membrane. It localises to the cytoskeleton. It is found in the spindle. It catalyses the reaction 2'-deoxyribonucleotide-(2'-deoxyribose 5'-phosphate)-2'-deoxyribonucleotide-DNA = a 3'-end 2'-deoxyribonucleotide-(2,3-dehydro-2,3-deoxyribose 5'-phosphate)-DNA + a 5'-end 5'-phospho-2'-deoxyribonucleoside-DNA + H(+). Its activity is regulated as follows. Endonuclease activity is inhibited by MgCl2 on apurinic/apyrimidinic DNA but not on UV-irradiated DNA. Its function is as follows. Component of the small ribosomal subunit. The ribosome is a large ribonucleoprotein complex responsible for the synthesis of proteins in the cell. Has endonuclease activity and plays a role in repair of damaged DNA. Cleaves phosphodiester bonds of DNAs containing altered bases with broad specificity and cleaves supercoiled DNA more efficiently than relaxed DNA. Displays high binding affinity for 7,8-dihydro-8-oxoguanine (8-oxoG), a common DNA lesion caused by reactive oxygen species (ROS). Has also been shown to bind with similar affinity to intact and damaged DNA. Stimulates the N-glycosylase activity of the base excision protein OGG1. Enhances the uracil excision activity of UNG1. Also stimulates the cleavage of the phosphodiester backbone by APEX1. When located in the mitochondrion, reduces cellular ROS levels and mitochondrial DNA damage. Has also been shown to negatively regulate DNA repair in cells exposed to hydrogen peroxide. Plays a role in regulating transcription as part of the NF-kappa-B p65-p50 complex where it binds to the RELA/p65 subunit, enhances binding of the complex to DNA and promotes transcription of target genes. Represses its own translation by binding to its cognate mRNA. Binds to and protects TP53/p53 from MDM2-mediated ubiquitination. Involved in spindle formation and chromosome movement during mitosis by regulating microtubule polymerization. Involved in induction of apoptosis through its role in activation of CASP8. Induces neuronal apoptosis by interacting with the E2F1 transcription factor and acting synergistically with it to up-regulate pro-apoptotic proteins BCL2L11/BIM and HRK/Dp5. Interacts with TRADD following exposure to UV radiation and induces apoptosis by caspase-dependent JNK activation. The chain is Small ribosomal subunit protein uS3 (RPS3) from Oryctolagus cuniculus (Rabbit).